The primary structure comprises 58 residues: UPF0391 membrane protein Maqu_2901 (58 aa).

Transmembrane regions (helical) follow at residues 4–24 (WAIV…GGIA) and 28–48 (AGFA…SLVV).

It belongs to the UPF0391 family.

Its subcellular location is the cell membrane. This is UPF0391 membrane protein Maqu_2901 from Marinobacter nauticus (strain ATCC 700491 / DSM 11845 / VT8) (Marinobacter aquaeolei).